The primary structure comprises 113 residues: N(2)-fixation sustaining protein CowN (113 aa).

It belongs to the CowN family.

Is required to sustain N(2)-dependent growth in the presence of low levels of carbon monoxide (CO). Probably acts by protecting the N(2) fixation ability of the nitrogenase complex, which is inactivated in the presence of CO. The polypeptide is N(2)-fixation sustaining protein CowN (Wolinella succinogenes (strain ATCC 29543 / DSM 1740 / CCUG 13145 / JCM 31913 / LMG 7466 / NCTC 11488 / FDC 602W) (Vibrio succinogenes)).